Here is a 496-residue protein sequence, read N- to C-terminus: Cobyric acid synthase (496 aa).

The region spanning Thr258–Leu427 is the GATase cobBQ-type domain. The Nucleophile role is filled by Cys339. His419 is an active-site residue.

Belongs to the CobB/CobQ family. CobQ subfamily.

Its pathway is cofactor biosynthesis; adenosylcobalamin biosynthesis. Its function is as follows. Catalyzes amidations at positions B, D, E, and G on adenosylcobyrinic A,C-diamide. NH(2) groups are provided by glutamine, and one molecule of ATP is hydrogenolyzed for each amidation. In Mycolicibacterium smegmatis (strain ATCC 700084 / mc(2)155) (Mycobacterium smegmatis), this protein is Cobyric acid synthase.